We begin with the raw amino-acid sequence, 876 residues long: Alanine--tRNA ligase (876 aa).

4 residues coordinate Zn(2+): His-565, His-569, Cys-667, and His-671.

The protein belongs to the class-II aminoacyl-tRNA synthetase family. It depends on Zn(2+) as a cofactor.

Its subcellular location is the cytoplasm. The enzyme catalyses tRNA(Ala) + L-alanine + ATP = L-alanyl-tRNA(Ala) + AMP + diphosphate. Catalyzes the attachment of alanine to tRNA(Ala) in a two-step reaction: alanine is first activated by ATP to form Ala-AMP and then transferred to the acceptor end of tRNA(Ala). Also edits incorrectly charged Ser-tRNA(Ala) and Gly-tRNA(Ala) via its editing domain. The polypeptide is Alanine--tRNA ligase (Staphylococcus aureus (strain MRSA252)).